The following is a 747-amino-acid chain: MERDTCDVLSRSKSASEETLHSCNEEEDPFRGMEPYLVRRLSSRSIQLPPLAFRQLEQADLRSESENIPRPTSLPLKILPLIAVTSADSSGFDVDNGTSAGRSPLDPMTSPGSGLILQANFVHSQRRESFLYRSDSDYDLSPKSMSRNSSIASDIHGDDLIVTPFAQVLASLRTVRNNFAALTNLQDRAPSKRSPMCNQPSINKATITEEAYQKLASETLEELDWCLDQLETLQTRHSVSEMASNKFKRMLNRELTHLSEMSRSGNQVSEYISNTFLDKQHEVEIPSPTQKEKEKKKRPMSQISGVKKLMHSSSLTNSCIPRFGVKTEQEDVLAKELEDVNKWGLHVFRIAELSGNRPLTVIMHTIFQERDLLKTFKIPVDTLITYLMTLEDHYHADVAYHNNIHAADVVQSTHVLLSTPALEAVFTDLEILAAIFASAIHDVDHPGVSNQFLINTNSELALMYNDSSVLENHHLAVGFKLLQEENCDIFQNLTKKQRQSLRKMVIDIVLATDMSKHMNLLADLKTMVETKKVTSSGVLLLDNYSDRIQVLQNMVHCADLSNPTKPLQLYRQWTDRIMEEFFRQGDRERERGMEISPMCDKHNASVEKSQVGFIDYIVHPLWETWADLVHPDAQDILDTLEDNREWYQSTIPQSPSPAPDDQEEGRQGQTEKFQFELTLEEDCESDTEKDSGSQVEEDTSCSDSKTLCTQDSESTEIPLDEQVEEEAVAEEESQPETCVPDDCCPDT.

Residues M1–D28 are disordered. The span at S14–N24 shows a compositional bias: basic and acidic residues. 4 positions are modified to phosphoserine: S238, S240, S287, and S314. The interval E282–Q302 is disordered. The PDEase domain occupies V325 to S654. K326 participates in a covalent cross-link: Glycyl lysine isopeptide (Lys-Gly) (interchain with G-Cter in SUMO). H401 (proton donor) is an active-site residue. H401 provides a ligand contact to 3',5'-cyclic AMP. Residue H401 participates in AMP binding. Residues H405, H441, D442, and D559 each coordinate Zn(2+). Residues D442, D559, N562, Q610, and F613 each coordinate AMP. Residue D442 coordinates Mg(2+). D442 is a Mn(2+) binding site. The 3',5'-cyclic AMP site is built by Q610 and F613. The interval S649–T747 is disordered. Residues C701 to S712 show a composition bias toward polar residues. Positions P718–Q734 are enriched in acidic residues.

It belongs to the cyclic nucleotide phosphodiesterase family. PDE4 subfamily. Homodimer for the long isoforms. Isoforms with truncated N-termini are monomeric. Binds ARRB2. Interacts with PDE4DIP. Identified in a complex composed of RYR1, PDE4D, PKA, FKBP1A and protein phosphatase 1 (PP1). Interacts (via N-terminal region) with SHANK2 (via proline-rich region); the interaction is increased in a PKA-dependent manner. The cofactor is Zn(2+). Mg(2+) serves as cofactor. Requires Mn(2+) as cofactor. Post-translationally, sumoylation of long isoforms by PIAS4 augments their activation by PKA phosphorylation and represses their inhibition by ERK phosphorylation. As to expression, expressed in brain (at protein level). Isoform 7 is detected in heart, brain, lung, kidney and testis.

The protein resides in the cytoplasm. Its subcellular location is the membrane. It localises to the cytoskeleton. It is found in the microtubule organizing center. The protein localises to the centrosome. The protein resides in the apical cell membrane. The catalysed reaction is 3',5'-cyclic AMP + H2O = AMP + H(+). Its pathway is purine metabolism; 3',5'-cyclic AMP degradation; AMP from 3',5'-cyclic AMP: step 1/1. Inhibited by rolipram. Activated by phosphatidic acid. Its function is as follows. Hydrolyzes the second messenger cAMP, which is a key regulator of many important physiological processes. In Mus musculus (Mouse), this protein is 3',5'-cyclic-AMP phosphodiesterase 4D (Pde4d).